Reading from the N-terminus, the 381-residue chain is L-lactate dehydrogenase A-like 6B (381 aa).

Residues 101 to 106 (DVDEGR) and Arg148 each bind NAD(+). Substrate is bound by residues Arg155, Asn187, and Arg218. Asn187 is an NAD(+) binding site. The Proton acceptor role is filled by His242. Thr297 is a binding site for substrate.

This sequence belongs to the LDH/MDH superfamily. LDH family.

It carries out the reaction (S)-lactate + NAD(+) = pyruvate + NADH + H(+). Its pathway is fermentation; pyruvate fermentation to lactate; (S)-lactate from pyruvate: step 1/1. This is L-lactate dehydrogenase A-like 6B (LDHAL6B) from Bos taurus (Bovine).